A 712-amino-acid chain; its full sequence is Polyribonucleotide nucleotidyltransferase (712 aa).

Mg(2+) contacts are provided by Asp487 and Asp493. Residues Pro554–Ile613 form the KH domain. One can recognise an S1 motif domain in the interval Gly623–Lys691.

This sequence belongs to the polyribonucleotide nucleotidyltransferase family. Requires Mg(2+) as cofactor.

It is found in the cytoplasm. The catalysed reaction is RNA(n+1) + phosphate = RNA(n) + a ribonucleoside 5'-diphosphate. In terms of biological role, involved in mRNA degradation. Catalyzes the phosphorolysis of single-stranded polyribonucleotides processively in the 3'- to 5'-direction. This is Polyribonucleotide nucleotidyltransferase from Rhizobium johnstonii (strain DSM 114642 / LMG 32736 / 3841) (Rhizobium leguminosarum bv. viciae).